Reading from the N-terminus, the 324-residue chain is Nidogen-1 (324 aa).

The NIDO domain maps to 16–178; it reads PFLADLDTTD…GVWVFEIGSP (163 aa). Asparagine 97 carries N-linked (GlcNAc...) asparagine glycosylation. 2 positions are modified to sulfotyrosine: tyrosine 200 and tyrosine 205. The tract at residues 219-259 is disordered; that stretch reads TQPFPSHSPRRGYPDPHNVPRTLAPSYEATERPHGIPTERT. A compositionally biased stretch (basic and acidic residues) spans 247-259; it reads ATERPHGIPTERT. One can recognise an EGF-like domain in the interval 295–324; it reads SQQTCANNRHQCSVHAECRDYATGFCCRCV. Cystine bridges form between cysteine 299/cysteine 312 and cysteine 306/cysteine 321.

In terms of assembly, interacts with FBLN1. Interacts with LGALS3BP. Interacts with PLXDC1. Interacts with SVEP1. N- and O-glycosylated.

The protein localises to the secreted. Its subcellular location is the extracellular space. It localises to the extracellular matrix. The protein resides in the basement membrane. In terms of biological role, sulfated glycoprotein widely distributed in basement membranes and tightly associated with laminin. Also binds to collagen IV and perlecan. It probably has a role in cell-extracellular matrix interactions. The protein is Nidogen-1 (Nid1) of Rattus norvegicus (Rat).